We begin with the raw amino-acid sequence, 407 residues long: Prolyl hydroxylase EGLN2 (407 aa).

Composition is skewed to low complexity over residues Met-1–Pro-24 and Ala-57–Pro-75. Disordered regions lie at residues Met-1 to Met-34, Cys-50 to Arg-89, and Ala-108 to Gly-157. The Bipartite nuclear localization signal signature appears at Arg-89–Arg-134. Position 130 is a phosphoserine (Ser-130). Residues Val-225–Ile-235 form a beta(2)beta(3) 'finger-like' loop region. A Fe2OG dioxygenase domain is found at Gly-278–Asp-376. Residues His-297, Asp-299, and His-358 each coordinate Fe cation. Arg-367 serves as a coordination point for 2-oxoglutarate.

In terms of assembly, interacts (preferably isoform p40) with SIAH2; the interaction targets both SIAH2 isoforms for proteasomal degradation in vitro. Interacts with LIMD1, WTIP and AJUBA. It depends on Fe(2+) as a cofactor. Requires L-ascorbate as cofactor. Post-translationally, ubiquitinated by SIAH1 and/or SIAH2 in response to the unfolded protein response (UPR), leading to its degradation. Expressed in adult and fetal heart, brain, liver, lung, skeletal muscle, and kidney. Also expressed in testis and placenta. Highest levels in adult brain, placenta, lung, kidney, and testis. Expressed in hormone responsive tissues, including normal and cancerous mammary, ovarian and prostate epithelium.

The protein localises to the nucleus. It carries out the reaction L-prolyl-[protein] + 2-oxoglutarate + O2 = trans-4-hydroxy-L-prolyl-[protein] + succinate + CO2. It catalyses the reaction L-prolyl-[hypoxia-inducible factor alpha subunit] + 2-oxoglutarate + O2 = trans-4-hydroxy-L-prolyl-[hypoxia-inducible factor alpha subunit] + succinate + CO2. Prolyl hydroxylase that mediates hydroxylation of proline residues in target proteins, such as ATF4, IKBKB, CEP192 and HIF1A. Target proteins are preferentially recognized via a LXXLAP motif. Cellular oxygen sensor that catalyzes, under normoxic conditions, the post-translational formation of 4-hydroxyproline in hypoxia-inducible factor (HIF) alpha proteins. Hydroxylates a specific proline found in each of the oxygen-dependent degradation (ODD) domains (N-terminal, NODD, and C-terminal, CODD) of HIF1A. Also hydroxylates HIF2A. Has a preference for the CODD site for both HIF1A and HIF2A. Hydroxylated HIFs are then targeted for proteasomal degradation via the von Hippel-Lindau ubiquitination complex. Under hypoxic conditions, the hydroxylation reaction is attenuated allowing HIFs to escape degradation resulting in their translocation to the nucleus, heterodimerization with HIF1B, and increased expression of hypoxy-inducible genes. EGLN2 is involved in regulating hypoxia tolerance and apoptosis in cardiac and skeletal muscle. Also regulates susceptibility to normoxic oxidative neuronal death. Links oxygen sensing to cell cycle and primary cilia formation by hydroxylating the critical centrosome component CEP192 which promotes its ubiquitination and subsequent proteasomal degradation. Hydroxylates IKBKB, mediating NF-kappa-B activation in hypoxic conditions. Also mediates hydroxylation of ATF4, leading to decreased protein stability of ATF4. The chain is Prolyl hydroxylase EGLN2 from Homo sapiens (Human).